A 166-amino-acid polypeptide reads, in one-letter code: 3-isopropylmalate dehydratase small subunit (166 aa).

The protein belongs to the LeuD family. LeuD type 2 subfamily. Heterodimer of LeuC and LeuD.

It catalyses the reaction (2R,3S)-3-isopropylmalate = (2S)-2-isopropylmalate. The protein operates within amino-acid biosynthesis; L-leucine biosynthesis; L-leucine from 3-methyl-2-oxobutanoate: step 2/4. Functionally, catalyzes the isomerization between 2-isopropylmalate and 3-isopropylmalate, via the formation of 2-isopropylmaleate. In Heliobacterium modesticaldum (strain ATCC 51547 / Ice1), this protein is 3-isopropylmalate dehydratase small subunit.